A 230-amino-acid polypeptide reads, in one-letter code: Cell division ATP-binding protein FtsE (230 aa).

Residues 3–228 form the ABC transporter domain; it reads ITLDHVTKQY…RDEQRGVYGM (226 aa). Residue 37–44 coordinates ATP; that stretch reads GPSGSGKS.

It belongs to the ABC transporter superfamily. As to quaternary structure, homodimer. Forms a membrane-associated complex with FtsX.

The protein resides in the cell membrane. Its function is as follows. Part of the ABC transporter FtsEX involved in cellular division. Has ATPase activity. The protein is Cell division ATP-binding protein FtsE of Mycobacterium tuberculosis (strain ATCC 25618 / H37Rv).